The chain runs to 210 residues: Riboflavin kinase (210 aa).

Positions 1-81 (MECRERRLAA…DLLRYFNIAS (81 aa)) are H-T-H motif-like. Residues 82-210 (IRLVGRVVSG…GDVVEVEVLL (129 aa)) form a riboflavin kinase region. 91–96 (GLGEGA) is a binding site for CDP. Positions 120 and 122 each coordinate Mg(2+). Residues Thr177 and Glu185 each contribute to the FMN site. 190–193 (VKLR) contacts CDP.

The protein belongs to the archaeal riboflavin kinase family. Mg(2+) is required as a cofactor.

It catalyses the reaction riboflavin + CTP = CDP + FMN + H(+). It functions in the pathway cofactor biosynthesis; FMN biosynthesis; FMN from riboflavin (CTP route): step 1/1. Functionally, catalyzes the CTP-dependent phosphorylation of riboflavin (vitamin B2) to form flavin mononucleotide (FMN). The protein is Riboflavin kinase (ribK) of Pyrobaculum arsenaticum (strain DSM 13514 / JCM 11321 / PZ6).